The following is a 354-amino-acid chain: Chorismate synthase (354 aa).

Arg48 contacts NADP(+). Residues 125-127 (RAS), Gly277, 292-296 (KPIPS), and Arg318 each bind FMN.

This sequence belongs to the chorismate synthase family. Homotetramer. It depends on FMNH2 as a cofactor.

It carries out the reaction 5-O-(1-carboxyvinyl)-3-phosphoshikimate = chorismate + phosphate. Its pathway is metabolic intermediate biosynthesis; chorismate biosynthesis; chorismate from D-erythrose 4-phosphate and phosphoenolpyruvate: step 7/7. Its function is as follows. Catalyzes the anti-1,4-elimination of the C-3 phosphate and the C-6 proR hydrogen from 5-enolpyruvylshikimate-3-phosphate (EPSP) to yield chorismate, which is the branch point compound that serves as the starting substrate for the three terminal pathways of aromatic amino acid biosynthesis. This reaction introduces a second double bond into the aromatic ring system. The chain is Chorismate synthase from Nitratidesulfovibrio vulgaris (strain DP4) (Desulfovibrio vulgaris).